The chain runs to 227 residues: PKHD-type hydroxylase CC_0027 (227 aa).

In terms of domain architecture, Fe2OG dioxygenase spans 78 to 178; the sequence is TILSPMFNRY…RTASFFWIQS (101 aa). Residues His96, Asp98, and His159 each coordinate Fe cation. Arg169 serves as a coordination point for 2-oxoglutarate.

The cofactor is Fe(2+). Requires L-ascorbate as cofactor.

The protein is PKHD-type hydroxylase CC_0027 of Caulobacter vibrioides (strain ATCC 19089 / CIP 103742 / CB 15) (Caulobacter crescentus).